The following is a 150-amino-acid chain: Myosin, essential light chain (150 aa).

EF-hand domains lie at 3-38 (ASAD…LGKS) and 75-110 (EQQK…LGDY). Positions 16, 18, 20, 22, and 27 each coordinate Ca(2+).

Myosin is a hexamer of 2 heavy chains and 4 light chains (two regulatory light chains and two essential light chains).

The sequence is that of Myosin, essential light chain (mlcE) from Dictyostelium discoideum (Social amoeba).